A 347-amino-acid polypeptide reads, in one-letter code: Haptoglobin (347 aa).

Positions 1–18 (MRALGAVVTLLLWGQLFA) are cleaved as a signal peptide. Residues 31–88 (DSCPKPPEIANGYVEHLVRYRCRQFYKLQTEGDGIYTLNSEKQWVNPAAGDKLPKCEA) form the Sushi domain. 4 disulfides stabilise this stretch: cysteine 52–cysteine 86, cysteine 90–cysteine 207, cysteine 250–cysteine 281, and cysteine 292–cysteine 322. Residues 103–345 (IIGGSMDAKG…LKDWVQETMA (243 aa)) enclose the Peptidase S1 domain. Asparagine 148 and asparagine 152 each carry an N-linked (GlcNAc...) asparagine glycan. The interaction with CD163 stretch occupies residues 259–264 (VPEKKG).

The protein belongs to the peptidase S1 family. Tetramer of two alpha and two beta chains; disulfide-linked. The hemoglobin/haptoglobin complex is composed of a haptoglobin dimer bound to two hemoglobin alpha-beta dimers. Interacts with CD163. Interacts with ERGIC3. In terms of tissue distribution, expressed by the liver and secreted in plasma.

Its subcellular location is the secreted. As a result of hemolysis, hemoglobin is found to accumulate in the kidney and is secreted in the urine. Haptoglobin captures, and combines with free plasma hemoglobin to allow hepatic recycling of heme iron and to prevent kidney damage. Haptoglobin also acts as an antioxidant, has antibacterial activity and plays a role in modulating many aspects of the acute phase response. Hemoglobin/haptoglobin complexes are rapidly cleared by the macrophage CD163 scavenger receptor expressed on the surface of liver Kupfer cells through an endocytic lysosomal degradation pathway. In Rattus norvegicus (Rat), this protein is Haptoglobin (Hp).